A 595-amino-acid chain; its full sequence is Indole-3-acetic acid-amido synthetase GH3.15 (595 aa).

ATP is bound by residues S97 to S98, T302, and F325 to E330. Residues F325 and F332 each contribute to the substrate site. Residues Y348 and D408 each coordinate ATP.

The protein belongs to the IAA-amido conjugating enzyme family. As to expression, expressed in seedlings, roots, and parts of the siliques.

It carries out the reaction (indol-3-yl)butanoate + L-cysteine + ATP = (indol-3-yl)butanoyl-L-cysteine + AMP + diphosphate + H(+). The enzyme catalyses (indol-3-yl)butanoate + L-glutamine + ATP = (indol-3-yl)butanoyl-L-glutamine + AMP + diphosphate + H(+). The catalysed reaction is 4-(2,4-dichlorophenoxy)butanoate + L-glutamine + ATP = 4-(2,4-dichlorophenoxy)butanoyl-L-glutamine + AMP + diphosphate + H(+). Indole-3-acetic acid-amido (IAA) synthetase that catalyzes the conjugation of amino acids to auxin specifically using the auxin precursor indole-3-butyric acid (IBA) and glutamine and, possibly, cysteine as substrates. Displays high catalytic activity with the auxinic phenoxyalkanoic acid herbicides 4-(2,4-dichlorophenoxy)butyric acid (2,4-DB) and to some extent 2,4-dichlorophenoxylacetic acid (2,4-D) as substrates, thus conferring resistance to herbicides. The protein is Indole-3-acetic acid-amido synthetase GH3.15 of Arabidopsis thaliana (Mouse-ear cress).